The following is a 246-amino-acid chain: 1-(5-phosphoribosyl)-5-[(5-phosphoribosylamino)methylideneamino] imidazole-4-carboxamide isomerase (246 aa).

Aspartate 7 acts as the Proton acceptor in catalysis. The Proton donor role is filled by aspartate 129.

Belongs to the HisA/HisF family.

The protein localises to the cytoplasm. The catalysed reaction is 1-(5-phospho-beta-D-ribosyl)-5-[(5-phospho-beta-D-ribosylamino)methylideneamino]imidazole-4-carboxamide = 5-[(5-phospho-1-deoxy-D-ribulos-1-ylimino)methylamino]-1-(5-phospho-beta-D-ribosyl)imidazole-4-carboxamide. The protein operates within amino-acid biosynthesis; L-histidine biosynthesis; L-histidine from 5-phospho-alpha-D-ribose 1-diphosphate: step 4/9. The polypeptide is 1-(5-phosphoribosyl)-5-[(5-phosphoribosylamino)methylideneamino] imidazole-4-carboxamide isomerase (Shewanella sediminis (strain HAW-EB3)).